The primary structure comprises 264 residues: 3-methyl-2-oxobutanoate hydroxymethyltransferase (264 aa).

2 residues coordinate Mg(2+): aspartate 45 and aspartate 84. Residues 45-46 (DS), aspartate 84, and lysine 112 contribute to the 3-methyl-2-oxobutanoate site. Residue glutamate 114 participates in Mg(2+) binding. Catalysis depends on glutamate 181, which acts as the Proton acceptor.

The protein belongs to the PanB family. In terms of assembly, homodecamer; pentamer of dimers. Requires Mg(2+) as cofactor.

Its subcellular location is the cytoplasm. The enzyme catalyses 3-methyl-2-oxobutanoate + (6R)-5,10-methylene-5,6,7,8-tetrahydrofolate + H2O = 2-dehydropantoate + (6S)-5,6,7,8-tetrahydrofolate. The protein operates within cofactor biosynthesis; (R)-pantothenate biosynthesis; (R)-pantoate from 3-methyl-2-oxobutanoate: step 1/2. Its function is as follows. Catalyzes the reversible reaction in which hydroxymethyl group from 5,10-methylenetetrahydrofolate is transferred onto alpha-ketoisovalerate to form ketopantoate. The protein is 3-methyl-2-oxobutanoate hydroxymethyltransferase of Escherichia coli (strain K12 / MC4100 / BW2952).